We begin with the raw amino-acid sequence, 241 residues long: Alpha/beta-tubulin-N-acetyltransferase 9 (241 aa).

An N-acetyltransferase domain is found at 34–181 (EELRHLTASE…VTLRLAVSEP (148 aa)).

This sequence belongs to the acetyltransferase family. GNAT subfamily.

It carries out the reaction N-terminal L-methionyl-[tubulin] + acetyl-CoA = N-terminal N(alpha)-acetyl-L-methionyl-[tubulin] + CoA + H(+). Functionally, N-acetyltransferase that mediates the acetylation of the N-terminal residues of alpha- and beta-tubulin. The polypeptide is Alpha/beta-tubulin-N-acetyltransferase 9 (Nat9) (Mus musculus (Mouse)).